The following is a 740-amino-acid chain: E3 ubiquitin-protein ligase WAV3 (740 aa).

The segment at 14-105 (PRNSDAAAPD…AISNPSSPRS (92 aa)) is disordered. Over residues 49–67 (SGGSNPSTPRSTSSPSLRC) the composition is skewed to low complexity. Positions 71-90 (DAQTPTAEQTSTPRSATKSP) are enriched in polar residues. The segment at 122–167 (CGICLNSVKTGQGTAKYTAECSHAFHFPCIADYVRKQGKLVCPVCN) adopts an RING-type; atypical zinc-finger fold. A VWFA domain is found at 332–476 (DLVVVVDVGG…IPVTEHGFGE (145 aa)). The disordered stretch occupies residues 677 to 709 (QSQHQQQHNQRRRGSERETTTTMTLMDENGEPL).

Interacts with SINAT1, SINAT2, SINAT3, SINAT4, SINAT5, TOR1/SPR2 and FIP2. As to expression, expressed in root tips and leaf primordia.

It carries out the reaction S-ubiquitinyl-[E2 ubiquitin-conjugating enzyme]-L-cysteine + [acceptor protein]-L-lysine = [E2 ubiquitin-conjugating enzyme]-L-cysteine + N(6)-ubiquitinyl-[acceptor protein]-L-lysine.. E3 ubiquitin-protein ligase involved in the regulation of root growth. Acts as a positive regulator of root gravitropism. Possesses E3 protein ligase activity in vitro. The polypeptide is E3 ubiquitin-protein ligase WAV3 (Arabidopsis thaliana (Mouse-ear cress)).